A 246-amino-acid polypeptide reads, in one-letter code: Transcription factor MYB13 (246 aa).

2 consecutive HTH myb-type domains span residues 9–61 and 62–116; these read KIGL…INYL and RPDI…KKRL. 2 DNA-binding regions (H-T-H motif) span residues 37 to 61 and 89 to 112; these read WRALPKLAGLLRCGKSCRLRWINYL and WSAIAAKLPGRTDNEIKNVWHTHL.

As to expression, expressed in roots and flowers. Expressed in shoot apex, axillary buds, at the basis of flowers and branching points of inflorescences.

The protein resides in the nucleus. Plays a regulatory role in meristem function. Functions as component of a regulatory network controlling the establishment and/or development of the shoot system by the regulation of apical meristem function. May play a role in tolerance to boric acid. The protein is Transcription factor MYB13 of Arabidopsis thaliana (Mouse-ear cress).